A 186-amino-acid chain; its full sequence is Apolipophorin-3 (186 aa).

The N-terminal stretch at 1-18 is a signal peptide; the sequence is MAAKYVFVVAACSALAQA. Positions 19–23 are excised as a propeptide; that stretch reads GIVRR.

The protein belongs to the insect apolipophorin-3 family. In terms of assembly, equilibrium between a soluble monomer and a bound lipoprotein form. Apolipophorin-3 associates with lipophorin during lipid loading until each particle contains 9 or 14 molecules of apolipophorin-3. As to expression, expressed in hemolymph. Also found in hemocytes and fat body.

It is found in the secreted. In terms of biological role, assists in the loading of diacylglycerol, generated from triacylglycerol stores in the fat body through the action of adipokinetic hormone, into lipophorin, the hemolymph lipoprotein. It increases the lipid carrying capacity of lipophorin by covering the expanding hydrophobic surface resulting from diacylglycerol uptake. It thus plays a critical role in the transport of lipids during flight in several species of insects. Has antibacterial activity against the Gram-positive bacteria L.monocytogenes (MIC=6.5 uM). Lacks antibacterial activity against the Gram-positive bacteria B.circulans, M.luteus, S.aureus, and S.lutea, and the Gram-negative bacteria E.coli D31, E.coli ATCC 25922, and S.typhimurium. Lacks antifungal activity against S.cerevisiae, P.pastoris, Z.marxianus, C.albicans, C.wickerhamii, A.niger, F.oxysporum, and T.harizianum. The chain is Apolipophorin-3 from Galleria mellonella (Greater wax moth).